The sequence spans 417 residues: UDP-N-acetylglucosamine 1-carboxyvinyltransferase (417 aa).

Position 22-23 (22-23 (KN)) interacts with phosphoenolpyruvate. Residue arginine 93 participates in UDP-N-acetyl-alpha-D-glucosamine binding. Catalysis depends on cysteine 117, which acts as the Proton donor. 2-(S-cysteinyl)pyruvic acid O-phosphothioketal is present on cysteine 117. UDP-N-acetyl-alpha-D-glucosamine is bound by residues 122-126 (RPVDQ), aspartate 305, and isoleucine 327.

This sequence belongs to the EPSP synthase family. MurA subfamily.

It is found in the cytoplasm. The enzyme catalyses phosphoenolpyruvate + UDP-N-acetyl-alpha-D-glucosamine = UDP-N-acetyl-3-O-(1-carboxyvinyl)-alpha-D-glucosamine + phosphate. The protein operates within cell wall biogenesis; peptidoglycan biosynthesis. Its function is as follows. Cell wall formation. Adds enolpyruvyl to UDP-N-acetylglucosamine. The protein is UDP-N-acetylglucosamine 1-carboxyvinyltransferase of Nitrosomonas europaea (strain ATCC 19718 / CIP 103999 / KCTC 2705 / NBRC 14298).